The following is a 314-amino-acid chain: Solute carrier family 25 member 44 (314 aa).

Solcar repeat units follow at residues 18-100 (KKFY…TRKF), 107-210 (SNTV…YAEQ), and 220-302 (PHIV…LKKL). 6 helical membrane-spanning segments follow: residues 20–42 (FYVF…TLIR), 71–90 (TGLY…GQCY), 113–133 (LVAG…IDVV), 185–201 (GYVA…AVWW), 222–239 (IVFQ…ASIL), and 278–296 (LSAR…VVGY).

This sequence belongs to the mitochondrial carrier (TC 2.A.29) family.

It is found in the mitochondrion membrane. The catalysed reaction is L-valine(in) = L-valine(out). The enzyme catalyses L-leucine(in) = L-leucine(out). Its function is as follows. Mitochondrial solute transporter which transports branched-chain amino acid (BCAA; valine, leucine and isoleucine) into mitochondria in brown adipose tissue (BAT). BAT is involved in BCAA catabolism and actively utilizes BCAA in the mitochondria for thermogenesis. The protein is Solute carrier family 25 member 44 of Homo sapiens (Human).